Reading from the N-terminus, the 138-residue chain is Fluoride-specific ion channel FluC (138 aa).

The next 4 membrane-spanning stretches (helical) occupy residues 34 to 54 (FMPK…GACA), 60 to 80 (MQFG…SFLM), 88 to 108 (FWGT…VVLV), and 112 to 132 (LPHA…AWLM). Na(+) contacts are provided by glycine 95 and threonine 98.

Belongs to the fluoride channel Fluc/FEX (TC 1.A.43) family.

Its subcellular location is the cell membrane. The enzyme catalyses fluoride(in) = fluoride(out). Its activity is regulated as follows. Na(+) is not transported, but it plays an essential structural role and its presence is essential for fluoride channel function. Functionally, fluoride-specific ion channel. Important for reducing fluoride concentration in the cell, thus reducing its toxicity. The sequence is that of Fluoride-specific ion channel FluC from Corynebacterium efficiens (strain DSM 44549 / YS-314 / AJ 12310 / JCM 11189 / NBRC 100395).